A 601-amino-acid chain; its full sequence is Probable cytochrome P450 525A1 (601 aa).

Residues 12-32 traverse the membrane as a helical segment; the sequence is ISYFLTCSIFGFILWILTEQI. The interval 205-253 is disordered; it reads NNNNNNNNNNNNNNNNNNNNNNNNNNNNNNNNNNNNNNNNNNNNNNNNN. Residue cysteine 544 coordinates heme.

Belongs to the cytochrome P450 family. Heme is required as a cofactor.

The protein localises to the membrane. The polypeptide is Probable cytochrome P450 525A1 (cyp525A1) (Dictyostelium discoideum (Social amoeba)).